The following is a 452-amino-acid chain: Pup--protein ligase (452 aa).

Mg(2+) is bound at residue Glu9. ATP is bound at residue Arg53. Tyr55 contributes to the Mg(2+) binding site. The active-site Proton acceptor is the Asp57. Glu63 provides a ligand contact to Mg(2+). Residues Thr66 and Trp419 each coordinate ATP.

Belongs to the Pup ligase/Pup deamidase family. Pup-conjugating enzyme subfamily.

The catalysed reaction is ATP + [prokaryotic ubiquitin-like protein]-L-glutamate + [protein]-L-lysine = ADP + phosphate + N(6)-([prokaryotic ubiquitin-like protein]-gamma-L-glutamyl)-[protein]-L-lysine.. Its pathway is protein degradation; proteasomal Pup-dependent pathway. It functions in the pathway protein modification; protein pupylation. Catalyzes the covalent attachment of the prokaryotic ubiquitin-like protein modifier Pup to the proteasomal substrate proteins, thereby targeting them for proteasomal degradation. This tagging system is termed pupylation. The ligation reaction involves the side-chain carboxylate of the C-terminal glutamate of Pup and the side-chain amino group of a substrate lysine. The polypeptide is Pup--protein ligase (Salinispora arenicola (strain CNS-205)).